Reading from the N-terminus, the 477-residue chain is Polyketide synthase-related protein Dhc1 (477 aa).

A Carrier domain is found at Glu34–Ala112. The residue at position 72 (Ser72) is an O-(pantetheine 4'-phosphoryl)serine. The tract at residues Leu161–Val322 is ketoreductase (KR) domain. The tract at residues Val410 to Glu435 is disordered. The segment covering Gln411–Gln422 has biased composition (low complexity). Basic and acidic residues predominate over residues Pro424–Glu435.

Its pathway is mycotoxin biosynthesis. In terms of biological role, polyketide synthase-related protein; part of the gene cluster that mediates the biosynthesis of 10,11-dehydrocurvularin, a prevalent fungal phytotoxin with heat shock response and immune-modulatory activities. The highly reducing polyketide synthase Dhc3 is responsible for biosynthesis up to the tetraketide stage. The non-reducing polyketide synthase Dhc5 then conducts four additional chain extension cycles, producing the unreduced part of the nascent octaketide from C-1 to C-8 in 10,11-dehydrocurvularin. The role of Dhc1 in 10,11-dehydrocurvularin biosynthesis has not been identified yet. This chain is Polyketide synthase-related protein Dhc1, found in Alternaria cinerariae.